The sequence spans 90 residues: Actobindin-B/C (90 aa).

WH2 domains follow at residues 4–21 (TANP…LKHA) and 40–57 (DHSS…LKHV). Residues 57–90 (VETQDRSAPVTEGATVKSNNHSALLGEIKSKAQE) form a disordered region.

Monomer.

Functionally, is able to bind two actin monomers at high concentrations of G-actin. Inhibits actin polymerization by sequestering G-actin and stabilizing actin dimers. This is Actobindin-B/C (abnB) from Dictyostelium discoideum (Social amoeba).